The primary structure comprises 225 residues: Peroxiredoxin-2E-2, chloroplastic (225 aa).

Residues 1–42 (MAAPTAAALSTLSTASVTSGKRFITSSFSLSFSSRPLATGVR) constitute a chloroplast transit peptide. The Thioredoxin domain maps to 63–225 (IAVGDKLPDA…SSAEEMLKAL (163 aa)). Cysteine 111 functions as the Cysteine sulfenic acid (-SOH) intermediate in the catalytic mechanism.

This sequence belongs to the peroxiredoxin family. Prx5 subfamily. As to quaternary structure, monomer.

It localises to the plastid. It is found in the chloroplast stroma. It catalyses the reaction [glutaredoxin]-dithiol + a hydroperoxide = [glutaredoxin]-disulfide + an alcohol + H2O. In terms of biological role, thiol-specific peroxidase that catalyzes the reduction of hydrogen peroxide and organic hydroperoxides to water and alcohols, respectively. Plays a role in cell protection against oxidative stress by detoxifying peroxides. May be involved in chloroplast redox homeostasis. The polypeptide is Peroxiredoxin-2E-2, chloroplastic (PRXIIE-2) (Oryza sativa subsp. japonica (Rice)).